The chain runs to 160 residues: Thy-1 membrane glycoprotein (160 aa).

The N-terminal stretch at 1–19 is a signal peptide; it reads MNPTVSIAVILTVLQAAHC. Position 20 is a pyrrolidone carboxylic acid (Gln20). An Ig-like V-type domain is found at 20-120; the sequence is QMIRDLSACL…YTGNQIKNIT (101 aa). Intrachain disulfides connect Cys28–Cys129 and Cys38–Cys103. 3 N-linked (GlcNAc...) asparagine glycosylation sites follow: Asn42, Asn78, and Asn118. Residue Cys129 is the site of GPI-anchor amidated cysteine attachment. The propeptide at 130–160 is removed in mature form; it reads VRLSLLIQNTSWLLLLLLSLPLLQAVDFVSL. Asn138 is a glycosylation site (N-linked (GlcNAc...) asparagine).

In terms of processing, the N-terminus is blocked. In terms of tissue distribution, forebrain, cerebellum and tectum.

It is found in the cell membrane. May play a role in cell-cell or cell-ligand interactions during synaptogenesis and other events in the brain. In Gallus gallus (Chicken), this protein is Thy-1 membrane glycoprotein (THY1).